The following is a 343-amino-acid chain: S-adenosylmethionine:tRNA ribosyltransferase-isomerase (343 aa).

This sequence belongs to the QueA family. As to quaternary structure, monomer.

The protein localises to the cytoplasm. The catalysed reaction is 7-aminomethyl-7-carbaguanosine(34) in tRNA + S-adenosyl-L-methionine = epoxyqueuosine(34) in tRNA + adenine + L-methionine + 2 H(+). It participates in tRNA modification; tRNA-queuosine biosynthesis. Its function is as follows. Transfers and isomerizes the ribose moiety from AdoMet to the 7-aminomethyl group of 7-deazaguanine (preQ1-tRNA) to give epoxyqueuosine (oQ-tRNA). This chain is S-adenosylmethionine:tRNA ribosyltransferase-isomerase, found in Enterococcus faecalis (strain ATCC 700802 / V583).